A 381-amino-acid chain; its full sequence is Putative F-box/kelch-repeat protein At1g60570 (381 aa).

Residues 19–65 (PTLIPSLPEELILSILARVSRLSYRSLSLVCKRFHSLLTSGEIYRFR) enclose the F-box domain. Kelch repeat units follow at residues 126 to 169 (KIYK…LIDG), 171 to 218 (IYVT…ERTN), 220 to 266 (LLVD…VIEN), and 269 to 314 (YDFF…DYGG).

The sequence is that of Putative F-box/kelch-repeat protein At1g60570 from Arabidopsis thaliana (Mouse-ear cress).